An 836-amino-acid chain; its full sequence is Protein O-mannosyl-transferase tmtc2 (836 aa).

The helical transmembrane segment at 1 to 21 (MIAELLSSALGLLLYLNTLGA) threads the bilayer. Residues 22-77 (DFCYDDSRAIKTNQDLLPETPWNHIFFNDFWGTLLTHSGSHKSYRPLCTLSFRLNY) lie on the Extracellular side of the membrane. A helical membrane pass occupies residues 78 to 98 (LFGGLDPWNYHLVNVLLHSAV). Residues 99–107 (TGLFTNLCK) lie on the Cytoplasmic side of the membrane. Residues 108–128 (ALFGSGCWTLIAGLLFASHPI) form a helical membrane-spanning segment. Residues 129 to 132 (HTEA) lie on the Extracellular side of the membrane. Residues 133-153 (VSGIVGRADVGSGLFFLLSLL) traverse the membrane as a helical segment. Topologically, residues 154–164 (CYMKHCSTRGY) are cytoplasmic. The helical transmembrane segment at 165 to 185 (SLSSWCWILCAGFWAACSMLW) threads the bilayer. The Extracellular segment spans residues 186–188 (KEQ). Residues 189 to 209 (GVTVLAVSAVYDVFVFHKLKM) form a helical membrane-spanning segment. Over 210 to 220 (NQIISVVFKEK) the chain is Cytoplasmic. Residues 221–241 (NVSFFFSVGLLFAWGVILLGA) traverse the membrane as a helical segment. Over 242-312 (RFYWMGNTPP…KTITDWRNIH (71 aa)) the chain is Extracellular. A helical transmembrane segment spans residues 313–333 (TVAFYILLILLAYSSLKGSAI). Residues 334 to 392 (KRDCNGKVFMNGKQNTNGHSCQSDLEHKNAEQNPVIASKLENGVKHHNSHEMQLPSTEN) lie on the Cytoplasmic side of the membrane. Residues 393–413 (IVVLALSLLIVPFVPASNLFF) form a helical membrane-spanning segment. A topological domain (extracellular) is located at residue Tyr414. Residues 415-435 (VGFVIAERVLYIPSMGFCLLV) form a helical membrane-spanning segment. At 436 to 449 (TVGARALYIKAQKN) the chain is on the cytoplasmic side. A helical membrane pass occupies residues 450–470 (ILKNLLFYATAALIVFYGLKT). Topologically, residues 471–836 (VVRNGDWKNE…EKQGLKNSKT (366 aa)) are extracellular. TPR repeat units follow at residues 493–526 (AKAWGNLGNVLKSQSKIDEAENAYRNALYYRSNM), 527–560 (ADMLYNLGLLLQENSKFSEALHYYKLAIGSRPTL), 561–594 (ASGYLNTGIILMNQGRTEEARRTFLKCSEIPDEN), 606–639 (TSCLYNLGKLYHEQGQYEDALIVYKEAIQKMPRQ), 643–676 (QSLYNMMGEAYMRLNVVSEAEHWYTESLKSKPDH), 677–710 (IPAHLTYGKLLTLTGRKNEAERYFLKAIQLDPNK), 711–744 (GNCYMHYGQFLLEEGRILEAAEMAKKAAELDSSE), 745–778 (FDVVFNAAHMLRQASLNEEAEKFYKLAAGLRQNY), and 779–812 (PAALMNLGAILHLNGKLEEAEYNYLRALQLKPDD).

Belongs to the TMTC family.

Its subcellular location is the membrane. It localises to the endoplasmic reticulum. It carries out the reaction a di-trans,poly-cis-dolichyl beta-D-mannosyl phosphate + L-seryl-[protein] = 3-O-(alpha-D-mannosyl)-L-seryl-[protein] + a di-trans,poly-cis-dolichyl phosphate + H(+). It catalyses the reaction a di-trans,poly-cis-dolichyl beta-D-mannosyl phosphate + L-threonyl-[protein] = 3-O-(alpha-D-mannosyl)-L-threonyl-[protein] + a di-trans,poly-cis-dolichyl phosphate + H(+). It functions in the pathway protein modification; protein glycosylation. Transfers mannosyl residues to the hydroxyl group of serine or threonine residues. The sequence is that of Protein O-mannosyl-transferase tmtc2 (tmtc2) from Xenopus laevis (African clawed frog).